A 620-amino-acid polypeptide reads, in one-letter code: 1-deoxy-D-xylulose-5-phosphate synthase (620 aa).

Thiamine diphosphate is bound by residues histidine 80 and 121–123 (GHS). Aspartate 152 serves as a coordination point for Mg(2+). Thiamine diphosphate is bound by residues 153–154 (GA), asparagine 181, tyrosine 288, and glutamate 370. Mg(2+) is bound at residue asparagine 181.

This sequence belongs to the transketolase family. DXPS subfamily. As to quaternary structure, homodimer. The cofactor is Mg(2+). Thiamine diphosphate is required as a cofactor.

The catalysed reaction is D-glyceraldehyde 3-phosphate + pyruvate + H(+) = 1-deoxy-D-xylulose 5-phosphate + CO2. The protein operates within metabolic intermediate biosynthesis; 1-deoxy-D-xylulose 5-phosphate biosynthesis; 1-deoxy-D-xylulose 5-phosphate from D-glyceraldehyde 3-phosphate and pyruvate: step 1/1. Catalyzes the acyloin condensation reaction between C atoms 2 and 3 of pyruvate and glyceraldehyde 3-phosphate to yield 1-deoxy-D-xylulose-5-phosphate (DXP). This chain is 1-deoxy-D-xylulose-5-phosphate synthase, found in Escherichia coli O6:K15:H31 (strain 536 / UPEC).